Here is a 184-residue protein sequence, read N- to C-terminus: MLKYLVQRRFTSTFYELFPKTFPKKLPIWTIDQSRLRKEYRQLQAQHHPDMAQQGSEQSSTLNQAYHTLKDPLRRSQYMLKLLRNIDLTQEQTSNEVTTSDPQLLLKVLDIHDELSQMDDEAGVKLLEKQNKERIQDIEAQLGQCYNDKDYAAAVKLTVELKYWYNLAKAFKDWAPGKQLEMNH.

The N-terminal 10 residues, M1–F10, are a transit peptide targeting the mitochondrion. Residues T13–L82 enclose the J domain. The HSP70 binding motif lies at H48–D50. Residues D71–H184 form an interaction with ISU1 region.

The protein belongs to the HscB family. Interacts with ISU1 and SSQ1.

Its subcellular location is the mitochondrion matrix. In terms of biological role, co-chaperone required for the assembly of iron-sulfur (Fe/S) clusters in mitochondria. Stimulates the ATPase activity of its specialized Hsp70 chaperone partner SSQ1, to mediate the transfer of iron-sulfur clusters from ISU1 to GRX5. Binds to the substrate protein ISU1 and targets it to SSQ1. The protein is J-type co-chaperone JAC1, mitochondrial of Saccharomyces cerevisiae (strain ATCC 204508 / S288c) (Baker's yeast).